Consider the following 65-residue polypeptide: DNA-directed RNA polymerase subunit omega (65 aa).

This sequence belongs to the RNA polymerase subunit omega family. In terms of assembly, the RNAP catalytic core consists of 2 alpha, 1 beta, 1 beta' and 1 omega subunit. When a sigma factor is associated with the core the holoenzyme is formed, which can initiate transcription.

It catalyses the reaction RNA(n) + a ribonucleoside 5'-triphosphate = RNA(n+1) + diphosphate. In terms of biological role, promotes RNA polymerase assembly. Latches the N- and C-terminal regions of the beta' subunit thereby facilitating its interaction with the beta and alpha subunits. The sequence is that of DNA-directed RNA polymerase subunit omega from Baumannia cicadellinicola subsp. Homalodisca coagulata.